Here is a 167-residue protein sequence, read N- to C-terminus: Small ribosomal subunit protein uS5 (167 aa).

Positions leucine 12–valine 75 constitute an S5 DRBM domain.

It belongs to the universal ribosomal protein uS5 family. Part of the 30S ribosomal subunit. Contacts proteins S4 and S8.

Its function is as follows. With S4 and S12 plays an important role in translational accuracy. Located at the back of the 30S subunit body where it stabilizes the conformation of the head with respect to the body. The sequence is that of Small ribosomal subunit protein uS5 from Shewanella denitrificans (strain OS217 / ATCC BAA-1090 / DSM 15013).